We begin with the raw amino-acid sequence, 150 residues long: SsrA-binding protein (150 aa).

The protein belongs to the SmpB family.

Its subcellular location is the cytoplasm. Its function is as follows. Required for rescue of stalled ribosomes mediated by trans-translation. Binds to transfer-messenger RNA (tmRNA), required for stable association of tmRNA with ribosomes. tmRNA and SmpB together mimic tRNA shape, replacing the anticodon stem-loop with SmpB. tmRNA is encoded by the ssrA gene; the 2 termini fold to resemble tRNA(Ala) and it encodes a 'tag peptide', a short internal open reading frame. During trans-translation Ala-aminoacylated tmRNA acts like a tRNA, entering the A-site of stalled ribosomes, displacing the stalled mRNA. The ribosome then switches to translate the ORF on the tmRNA; the nascent peptide is terminated with the 'tag peptide' encoded by the tmRNA and targeted for degradation. The ribosome is freed to recommence translation, which seems to be the essential function of trans-translation. This Bacteroides thetaiotaomicron (strain ATCC 29148 / DSM 2079 / JCM 5827 / CCUG 10774 / NCTC 10582 / VPI-5482 / E50) protein is SsrA-binding protein.